Here is a 61-residue protein sequence, read N- to C-terminus: UPF0370 protein SG1720 (61 aa).

The chain crosses the membrane as a helical span at residues 3–23 (WLADYWWVVLLVLAGMLIGGV). The segment covering 37-47 (NRPELPPHRDN) has biased composition (basic and acidic residues). Positions 37 to 61 (NRPELPPHRDNNAQWDEEDDWPKKP) are disordered. The segment covering 51 to 61 (WDEEDDWPKKP) has biased composition (acidic residues).

This sequence belongs to the UPF0370 family.

Its subcellular location is the cell membrane. The protein is UPF0370 protein SG1720 of Sodalis glossinidius (strain morsitans).